The sequence spans 305 residues: Ribosomal protein L11 methyltransferase (305 aa).

Positions 152, 173, 195, and 237 each coordinate S-adenosyl-L-methionine.

This sequence belongs to the methyltransferase superfamily. PrmA family.

It localises to the cytoplasm. It catalyses the reaction L-lysyl-[protein] + 3 S-adenosyl-L-methionine = N(6),N(6),N(6)-trimethyl-L-lysyl-[protein] + 3 S-adenosyl-L-homocysteine + 3 H(+). Methylates ribosomal protein L11. The protein is Ribosomal protein L11 methyltransferase of Hamiltonella defensa subsp. Acyrthosiphon pisum (strain 5AT).